The sequence spans 1558 residues: Calmodulin-regulated spectrin-associated protein 1-B (1558 aa).

One can recognise a Calponin-homology (CH) domain in the interval 231 to 346 (WYWKLVPVRY…FIAELFWWFE (116 aa)). Polar residues-rich tracts occupy residues 400-417 (VQNS…SGFS), 440-450 (ACRNRSNSLTQ), and 504-516 (ASTV…SHPG). Disordered regions lie at residues 400–464 (VQNS…SDKR), 504–523 (ASTV…VRRI), 551–585 (NDIT…SDSR), 602–675 (AKEK…APGQ), 737–790 (TKEL…VASG), 803–850 (QRFG…QNKD), and 943–968 (DRSK…SSSP). Residues 602–620 (AKEKSISLNKEEESGEGRQ) are compositionally biased toward basic and acidic residues. Residues 643-658 (QTLNRTFTPNTSSEFE) are compositionally biased toward polar residues. Residues 737-772 (TKELHPDKKQHFEEEVESAKLREDMNVKEHEDKDGG) are compositionally biased toward basic and acidic residues. Composition is skewed to low complexity over residues 776 to 790 (SSPG…VASG) and 812 to 822 (RSSTSSSQRTT). Residues 849-887 (KDNANMLASELVQLHMQLEEKRRAIESQKKKMEILTARQ) are a coiled coil. Positions 943–955 (DRSKEAEEPEKAS) are enriched in basic and acidic residues. Residues 971-1004 (VEEEVDLNECNRSIELLNEAIGSIQQQMMQLSLQ) adopt a coiled-coil conformation. 4 disordered regions span residues 1041-1131 (FVEP…TFHL), 1257-1293 (LRKQ…RREL), 1305-1344 (ELCE…KCPA), and 1360-1414 (LASV…ITST). A compositionally biased stretch (low complexity) spans 1080-1090 (SSTPTPTDSPS). Positions 1106–1115 (DFVQSSVRSE) are enriched in polar residues. Residues 1243–1303 (AFLLKQQRKA…IKQEYLRKKQ (61 aa)) adopt a coiled-coil conformation. Basic residues predominate over residues 1317–1328 (PKTKPKKQRLKS). The region spanning 1421–1555 (GPKLFKEPSA…QAKRPAGPKK (135 aa)) is the CKK domain.

The protein belongs to the CAMSAP1 family.

Its subcellular location is the cytoplasm. The protein resides in the cytoskeleton. In terms of biological role, key microtubule-organizing protein that specifically binds the minus-end of non-centrosomal microtubules and regulates their dynamics and organization. Specifically recognizes growing microtubule minus-ends and stabilizes microtubules. Acts on free microtubule minus-ends that are not capped by microtubule-nucleating proteins or other factors and protects microtubule minus-ends from depolymerization. In contrast to camsap2 and camsap3, tracks along the growing tips of minus-end microtubules without significantly affecting the polymerization rate: binds at the very tip of the microtubules minus-end and acts as a minus-end tracking protein (-TIP) that dissociates from microtubules after allowing tubulin incorporation. Through interaction with spectrin may regulate neurite outgrowth. The polypeptide is Calmodulin-regulated spectrin-associated protein 1-B (camsap1b) (Danio rerio (Zebrafish)).